A 131-amino-acid polypeptide reads, in one-letter code: Fatty acid-binding protein (131 aa).

Residues Arg-106 and 126–128 contribute to the (5Z,8Z,11Z,14Z)-eicosatetraenoate site; that span reads RFY. (9Z)-octadecenoate contacts are provided by residues Arg-106 and 126-128; that span reads RFY.

Belongs to the calycin superfamily. Fatty-acid binding protein (FABP) family.

The protein localises to the cytoplasm. Functionally, FABPs are thought to play a role in the intracellular transport of long-chain fatty acids and their acyl-CoA esters. In Tyrophagus putrescentiae (Mold mite), this protein is Fatty acid-binding protein.